The primary structure comprises 386 residues: Delta(7)-sterol 5(6)-desaturase ERG3 (386 aa).

The next 3 helical transmembrane spans lie at 120–140 (LSLFIITTIFGWLLYFIVAYL), 172–192 (IPVMVLLTIPFFLLELNGYSF), and 206–226 (AILWQIPKFILFTDCGIYFLH). The Fatty acid hydroxylase domain occupies 214–337 (FILFTDCGIY…FTTLWDRLGN (124 aa)). A Histidine box-1 motif is present at residues 226–230 (HRWLH). Positions 239–243 (HKPHH) match the Histidine box-2 motif. Residues 272–292 (PLLFPLHKVLYLFLFTFVNFW) form a helical membrane-spanning segment. The Histidine box-3 motif lies at 314–318 (HTVHH).

Belongs to the sterol desaturase family. Fe cation serves as cofactor.

Its subcellular location is the endoplasmic reticulum membrane. It carries out the reaction a Delta(7)-sterol + 2 Fe(II)-[cytochrome b5] + O2 + 2 H(+) = a Delta(5),Delta(7)-sterol + 2 Fe(III)-[cytochrome b5] + 2 H2O. Its pathway is steroid metabolism; ergosterol biosynthesis; ergosterol from zymosterol: step 3/5. C-5 sterol desaturase; part of the third module of ergosterol biosynthesis pathway that includes the late steps of the pathwa. ERG3 catalyzes the introduction of a C-5 double bond in the B ring to produce 5-dehydroepisterol. The third module or late pathway involves the ergosterol synthesis itself through consecutive reactions that mainly occur in the endoplasmic reticulum (ER) membrane. Firstly, the squalene synthase ERG9 catalyzes the condensation of 2 farnesyl pyrophosphate moieties to form squalene, which is the precursor of all steroids. Squalene synthase is crucial for balancing the incorporation of farnesyl diphosphate (FPP) into sterol and nonsterol isoprene synthesis. Secondly, the squalene epoxidase ERG1 catalyzes the stereospecific oxidation of squalene to (S)-2,3-epoxysqualene, which is considered to be a rate-limiting enzyme in steroid biosynthesis. Then, the lanosterol synthase ERG7 catalyzes the cyclization of (S)-2,3 oxidosqualene to lanosterol, a reaction that forms the sterol core. In the next steps, lanosterol is transformed to zymosterol through a complex process involving various demethylation, reduction and desaturation reactions. The lanosterol 14-alpha-demethylase ERG11 (also known as CYP51) catalyzes C14-demethylation of lanosterol to produce 4,4'-dimethyl cholesta-8,14,24-triene-3-beta-ol, which is critical for ergosterol biosynthesis. The C-14 reductase ERG24 reduces the C14=C15 double bond of 4,4-dimethyl-cholesta-8,14,24-trienol to produce 4,4-dimethyl-cholesta-8,24-dienol. 4,4-dimethyl-cholesta-8,24-dienol is substrate of the C-4 demethylation complex ERG25-ERG26-ERG27 in which ERG25 catalyzes the three-step monooxygenation required for the demethylation of 4,4-dimethyl and 4alpha-methylsterols, ERG26 catalyzes the oxidative decarboxylation that results in a reduction of the 3-beta-hydroxy group at the C-3 carbon to an oxo group, and ERG27 is responsible for the reduction of the keto group on the C-3. ERG28 has a role as a scaffold to help anchor ERG25, ERG26 and ERG27 to the endoplasmic reticulum and ERG29 regulates the activity of the iron-containing C4-methylsterol oxidase ERG25. Then, the sterol 24-C-methyltransferase ERG6 catalyzes the methyl transfer from S-adenosyl-methionine to the C-24 of zymosterol to form fecosterol. The C-8 sterol isomerase ERG2 catalyzes the reaction which results in unsaturation at C-7 in the B ring of sterols and thus converts fecosterol to episterol. The sterol-C5-desaturase ERG3 then catalyzes the introduction of a C-5 double bond in the B ring to produce 5-dehydroepisterol. The C-22 sterol desaturase ERG5 further converts 5-dehydroepisterol into ergosta-5,7,22,24(28)-tetraen-3beta-ol by forming the C-22(23) double bond in the sterol side chain. Finally, ergosta-5,7,22,24(28)-tetraen-3beta-ol is substrate of the C-24(28) sterol reductase ERG4 to produce ergosterol. In Candida albicans (strain SC5314 / ATCC MYA-2876) (Yeast), this protein is Delta(7)-sterol 5(6)-desaturase ERG3.